We begin with the raw amino-acid sequence, 81 residues long: Cytotoxin 8 (81 aa).

The first 21 residues, 1 to 21, serve as a signal peptide directing secretion; the sequence is MKTLLLTLVVVTIVCLDLGYT. Disulfide bonds link C24–C42, C35–C59, C63–C74, and C75–C80.

This sequence belongs to the three-finger toxin family. Short-chain subfamily. Type IA cytotoxin sub-subfamily. In terms of assembly, monomer in solution; Homodimer and oligomer in the presence of negatively charged lipids forming a pore with a size ranging between 20 and 30 Angstroms. Expressed by the venom gland.

It localises to the secreted. The protein resides in the target cell membrane. Functionally, shows cytolytic activity on many different cells by forming pore in lipid membranes. In vivo, increases heart rate or kills the animal by cardiac arrest. In addition, it binds to heparin with high affinity, interacts with Kv channel-interacting protein 1 (KCNIP1) in a calcium-independent manner, and binds to integrin alpha-V/beta-3 (ITGAV/ITGB3) with moderate affinity. The chain is Cytotoxin 8 from Naja atra (Chinese cobra).